A 465-amino-acid polypeptide reads, in one-letter code: Methylenetetrahydrofolate--tRNA-(uracil-5-)-methyltransferase TrmFO (465 aa).

11 to 16 (GGGLAG) serves as a coordination point for FAD.

This sequence belongs to the MnmG family. TrmFO subfamily. FAD serves as cofactor.

It is found in the cytoplasm. The catalysed reaction is uridine(54) in tRNA + (6R)-5,10-methylene-5,6,7,8-tetrahydrofolate + NADH + H(+) = 5-methyluridine(54) in tRNA + (6S)-5,6,7,8-tetrahydrofolate + NAD(+). The enzyme catalyses uridine(54) in tRNA + (6R)-5,10-methylene-5,6,7,8-tetrahydrofolate + NADPH + H(+) = 5-methyluridine(54) in tRNA + (6S)-5,6,7,8-tetrahydrofolate + NADP(+). Its function is as follows. Catalyzes the folate-dependent formation of 5-methyl-uridine at position 54 (M-5-U54) in all tRNAs. The chain is Methylenetetrahydrofolate--tRNA-(uracil-5-)-methyltransferase TrmFO from Acaryochloris marina (strain MBIC 11017).